We begin with the raw amino-acid sequence, 412 residues long: MQMLTLAQQAKIASIELAQFGNVQKNHALLTIAEQLEQRSAEILAANAKDIEFAKNQGISTAIIDRLLLNESRLQGIANDVRNVAKLADPVGQVIDGGVLNSGLKIERQRVPLGVILTIYEARPNVTIDVASLCLKTGNAVILRGGKETKFTNAVLVEVVQQALETAGLPKLAVQAVTDPDRALLLELLKLDRYIDMVIPRGGAGLHQFCKENSTIPVIVGGIGVCHMFVEKSADQEKALELIANAKTQRPSTCNTLETLLVEKAIAGEFLPKLANRMKALDVTLHTDDLQKTEGIEPLDDARMRQEWLSLDLNVVVIDNLTKAVEHIREYGSQHSEAILTSDYQLARQFVAQVDAAAVYINASTRFTDGGEFGLGAEVAVSTQKLHARGPMGLEALTTYKWVCEGDYLVRK.

The protein belongs to the gamma-glutamyl phosphate reductase family.

The protein localises to the cytoplasm. It catalyses the reaction L-glutamate 5-semialdehyde + phosphate + NADP(+) = L-glutamyl 5-phosphate + NADPH + H(+). Its pathway is amino-acid biosynthesis; L-proline biosynthesis; L-glutamate 5-semialdehyde from L-glutamate: step 2/2. Functionally, catalyzes the NADPH-dependent reduction of L-glutamate 5-phosphate into L-glutamate 5-semialdehyde and phosphate. The product spontaneously undergoes cyclization to form 1-pyrroline-5-carboxylate. In Actinobacillus pleuropneumoniae serotype 5b (strain L20), this protein is Gamma-glutamyl phosphate reductase.